Consider the following 345-residue polypeptide: S-adenosylmethionine:tRNA ribosyltransferase-isomerase (345 aa).

The protein belongs to the QueA family. In terms of assembly, monomer.

It localises to the cytoplasm. The enzyme catalyses 7-aminomethyl-7-carbaguanosine(34) in tRNA + S-adenosyl-L-methionine = epoxyqueuosine(34) in tRNA + adenine + L-methionine + 2 H(+). The protein operates within tRNA modification; tRNA-queuosine biosynthesis. Functionally, transfers and isomerizes the ribose moiety from AdoMet to the 7-aminomethyl group of 7-deazaguanine (preQ1-tRNA) to give epoxyqueuosine (oQ-tRNA). The protein is S-adenosylmethionine:tRNA ribosyltransferase-isomerase of Shewanella sp. (strain ANA-3).